A 471-amino-acid chain; its full sequence is Probable ribonuclease FAU-1 (471 aa).

This sequence belongs to the FAU-1 family.

In terms of biological role, probable RNase involved in rRNA stability through maturation and/or degradation of precursor rRNAs. Binds to RNA in loop regions with AU-rich sequences. This chain is Probable ribonuclease FAU-1, found in Caldivirga maquilingensis (strain ATCC 700844 / DSM 13496 / JCM 10307 / IC-167).